Here is a 60-residue protein sequence, read N- to C-terminus: Large ribosomal subunit protein bL32 (60 aa).

The protein belongs to the bacterial ribosomal protein bL32 family.

The sequence is that of Large ribosomal subunit protein bL32 (rpmF) from Thermotoga maritima (strain ATCC 43589 / DSM 3109 / JCM 10099 / NBRC 100826 / MSB8).